The primary structure comprises 112 residues: Integration host factor subunit alpha (112 aa).

This sequence belongs to the bacterial histone-like protein family. As to quaternary structure, heterodimer of an alpha and a beta chain.

This protein is one of the two subunits of integration host factor, a specific DNA-binding protein that functions in genetic recombination as well as in transcriptional and translational control. This chain is Integration host factor subunit alpha, found in Rhizobium rhizogenes (strain K84 / ATCC BAA-868) (Agrobacterium radiobacter).